A 267-amino-acid polypeptide reads, in one-letter code: tRNA pseudouridine synthase A (267 aa).

The Nucleophile role is filled by Asp51. Residue Tyr109 coordinates substrate.

This sequence belongs to the tRNA pseudouridine synthase TruA family. In terms of assembly, homodimer.

The enzyme catalyses uridine(38/39/40) in tRNA = pseudouridine(38/39/40) in tRNA. Functionally, formation of pseudouridine at positions 38, 39 and 40 in the anticodon stem and loop of transfer RNAs. This Staphylococcus aureus (strain MSSA476) protein is tRNA pseudouridine synthase A.